Here is a 3255-residue protein sequence, read N- to C-terminus: Genome polyprotein (3255 aa).

A Peptidase S30 domain is found at 292 to 437; that stretch reads VMNQQTLMAF…HSITHRMVQY (146 aa). Catalysis depends on for P1 proteinase activity residues His-345, Asp-354, and Ser-388. The Involved in interaction with stylet and aphid transmission motif lies at 489–492; sequence KITC. The short motif at 747–749 is the Involved in virions binding and aphid transmission element; it reads PTK. Positions 773 to 895 constitute a Peptidase C6 domain; the sequence is MFVTKDGYCY…ESEMQHYRVG (123 aa). Active-site for helper component proteinase activity residues include Cys-781 and His-854. One can recognise a Helicase ATP-binding domain in the interval 1397-1549; that stretch reads EIAHNEYRDI…PMHMVDIATE (153 aa). Residue 1410–1417 participates in ATP binding; sequence GGVGSGKS. A DECH box motif is present at residues 1499–1502; it reads DECH. Positions 1568-1727 constitute a Helicase C-terminal domain; that stretch reads DATKKGDNIL…GLPVMTSNVS (160 aa). The Nuclear localization signal motif lies at 2062 to 2069; sequence EKGKKSGK. The residue at position 2084 (Tyr-2084) is an O-(5'-phospho-RNA)-tyrosine. In terms of domain architecture, Peptidase C4 spans 2215 to 2433; that stretch reads SKTLFRGLRD…MVWGGINLIN (219 aa). Catalysis depends on for nuclear inclusion protein A activity residues His-2260, Asp-2295, and Cys-2365. Residues 2699-2823 form the RdRp catalytic domain; that stretch reads WVYCDADGSQ…AIKPEHESLL (125 aa). The interval 2980 to 3028 is disordered; sequence AKLDAGQGSKTDDKQKNSADPKDNIITEKGSGSGQMKKDDDINAGLHGK. A compositionally biased stretch (basic and acidic residues) spans 2989-3005; sequence KTDDKQKNSADPKDNII. Thr-3237 is subject to Phosphothreonine.

This sequence belongs to the potyviridae genome polyprotein family. Interacts with host eIF4E protein (via cap-binding region); this interaction mediates the translation of the VPg-viral RNA conjugates. Part of a complex that comprises VPg, RNA, host EIF4E and EIF4G; this interaction mediates the translation of the VPg-viral RNA conjugates. Post-translationally, VPg is uridylylated by the polymerase and is covalently attached to the 5'-end of the genomic RNA. This uridylylated form acts as a nucleotide-peptide primer for the polymerase. Potyviral RNA is expressed as two polyproteins which undergo post-translational proteolytic processing. Genome polyprotein is processed by NIa-pro, P1 and HC-pro proteinases resulting in the production of at least ten individual proteins. P3N-PIPO polyprotein is cleaved by P1 and HC-pro proteinases resulting in the production of three individual proteins. The P1 proteinase and the HC-pro cleave only their respective C-termini autocatalytically. 6K1 is essential for proper proteolytic separation of P3 from CI.

The protein localises to the host cytoplasmic vesicle. The protein resides in the host nucleus. Its subcellular location is the virion. It carries out the reaction RNA(n) + a ribonucleoside 5'-triphosphate = RNA(n+1) + diphosphate. It catalyses the reaction Hydrolyzes glutaminyl bonds, and activity is further restricted by preferences for the amino acids in P6 - P1' that vary with the species of potyvirus, e.g. Glu-Xaa-Xaa-Tyr-Xaa-Gln-|-(Ser or Gly) for the enzyme from tobacco etch virus. The natural substrate is the viral polyprotein, but other proteins and oligopeptides containing the appropriate consensus sequence are also cleaved.. The enzyme catalyses Hydrolyzes a Gly-|-Gly bond at its own C-terminus, commonly in the sequence -Tyr-Xaa-Val-Gly-|-Gly, in the processing of the potyviral polyprotein.. Its function is as follows. Required for aphid transmission and also has proteolytic activity. Only cleaves a Gly-Gly dipeptide at its own C-terminus. Interacts with virions and aphid stylets. Acts as a suppressor of RNA-mediated gene silencing, also known as post-transcriptional gene silencing (PTGS), a mechanism of plant viral defense that limits the accumulation of viral RNAs. May have RNA-binding activity. In terms of biological role, has helicase activity. It may be involved in replication. Functionally, indispensable for virus replication. Reduces the abundance of host transcripts related to jasmonic acid biosynthesis therefore altering the host defenses. In order to increase its own stability, decreases host protein degradation pathways. Indispensable for virus replication. Its function is as follows. Mediates the cap-independent, EIF4E-dependent translation of viral genomic RNAs. Binds to the cap-binding site of host EIF4E and thus interferes with the host EIF4E-dependent mRNA export and translation. VPg-RNA directly binds EIF4E and is a template for transcription. Also forms trimeric complexes with EIF4E-EIF4G, which are templates for translation. In terms of biological role, has RNA-binding and proteolytic activities. Functionally, an RNA-dependent RNA polymerase that plays an essential role in the virus replication. Involved in aphid transmission, cell-to-cell and systemis movement, encapsidation of the viral RNA and in the regulation of viral RNA amplification. The sequence is that of Genome polyprotein from Lettuce mosaic virus (strain 0 / isolate French) (LMV).